A 240-amino-acid polypeptide reads, in one-letter code: Fatty acid metabolism regulator protein (240 aa).

In terms of domain architecture, HTH gntR-type spans lysine 6 to phenylalanine 74. Residues glutamate 34 to glutamine 53 constitute a DNA-binding region (H-T-H motif).

Homodimer.

Its subcellular location is the cytoplasm. Its function is as follows. Multifunctional regulator of fatty acid metabolism. This Shewanella oneidensis (strain ATCC 700550 / JCM 31522 / CIP 106686 / LMG 19005 / NCIMB 14063 / MR-1) protein is Fatty acid metabolism regulator protein.